A 515-amino-acid chain; its full sequence is Maturase K (515 aa).

The protein belongs to the intron maturase 2 family. MatK subfamily.

It localises to the plastid. It is found in the chloroplast. In terms of biological role, usually encoded in the trnK tRNA gene intron. Probably assists in splicing its own and other chloroplast group II introns. The chain is Maturase K from Pinus pinea (Italian stone pine).